The chain runs to 389 residues: Probable acyl-CoA dehydrogenase fadE25 (389 aa).

Belongs to the acyl-CoA dehydrogenase family. Requires FAD as cofactor.

The enzyme catalyses a 2,3-saturated acyl-CoA + A = a 2,3-dehydroacyl-CoA + AH2. The chain is Probable acyl-CoA dehydrogenase fadE25 (fadE25) from Mycobacterium bovis (strain ATCC BAA-935 / AF2122/97).